The sequence spans 237 residues: Demethylmenaquinone methyltransferase (237 aa).

Residues T58, D79, and 106 to 107 contribute to the S-adenosyl-L-methionine site; that span reads NA.

This sequence belongs to the class I-like SAM-binding methyltransferase superfamily. MenG/UbiE family.

The catalysed reaction is a 2-demethylmenaquinol + S-adenosyl-L-methionine = a menaquinol + S-adenosyl-L-homocysteine + H(+). The protein operates within quinol/quinone metabolism; menaquinone biosynthesis; menaquinol from 1,4-dihydroxy-2-naphthoate: step 2/2. Its function is as follows. Methyltransferase required for the conversion of demethylmenaquinol (DMKH2) to menaquinol (MKH2). The sequence is that of Demethylmenaquinone methyltransferase from Bacillus cereus (strain B4264).